The chain runs to 339 residues: Dihydroorotase (339 aa).

Residues His12 and His14 each contribute to the Zn(2+) site. Residues 14 to 16 (HVR) and Asn40 contribute to the substrate site. Lys94, His133, His167, and Asp239 together coordinate Zn(2+). The residue at position 94 (Lys94) is an N6-carboxylysine. Position 133 (His133) interacts with substrate. The active site involves Asp239. His243 and Ala255 together coordinate substrate.

This sequence belongs to the metallo-dependent hydrolases superfamily. DHOase family. Class II DHOase subfamily. As to quaternary structure, homodimer. The cofactor is Zn(2+).

The catalysed reaction is (S)-dihydroorotate + H2O = N-carbamoyl-L-aspartate + H(+). It participates in pyrimidine metabolism; UMP biosynthesis via de novo pathway; (S)-dihydroorotate from bicarbonate: step 3/3. Functionally, catalyzes the reversible cyclization of carbamoyl aspartate to dihydroorotate. In Helicobacter pylori (strain HPAG1), this protein is Dihydroorotase.